The sequence spans 275 residues: Probable endonuclease 4 (275 aa).

Zn(2+) contacts are provided by His66, His106, Glu140, Asp172, His175, His209, Asp222, His224, and Glu254.

Belongs to the AP endonuclease 2 family. It depends on Zn(2+) as a cofactor.

It catalyses the reaction Endonucleolytic cleavage to 5'-phosphooligonucleotide end-products.. Its function is as follows. Endonuclease IV plays a role in DNA repair. It cleaves phosphodiester bonds at apurinic or apyrimidinic (AP) sites, generating a 3'-hydroxyl group and a 5'-terminal sugar phosphate. In Halobacterium salinarum (strain ATCC 29341 / DSM 671 / R1), this protein is Probable endonuclease 4.